The sequence spans 591 residues: Probable sulfoacetaldehyde acetyltransferase (591 aa).

Residues 359-383 (MDHEDDDPGTEWNVGARQREPDRMS) form a disordered region.

Belongs to the TPP enzyme family. It depends on Mg(2+) as a cofactor. Requires thiamine diphosphate as cofactor.

The protein localises to the cytoplasm. It catalyses the reaction acetyl phosphate + sulfite + H(+) = sulfoacetaldehyde + phosphate. It functions in the pathway organosulfur degradation; taurine degradation via aerobic pathway; acetyl phosphate and sulfite from taurine: step 2/2. The protein is Probable sulfoacetaldehyde acetyltransferase (xsc) of Rhizobium meliloti (strain 1021) (Ensifer meliloti).